The following is a 78-amino-acid chain: Protein Vpr (78 aa).

A homooligomerization region spans residues 1–42 (MEQAPEDQGPQRKPHNEWTLELLEELKNEAVRHFPRIWLHGL).

Belongs to the HIV-1 VPR protein family. In terms of assembly, homooligomer, may form homodimer. Interacts with p6-gag region of the Pr55 Gag precursor protein through a (Leu-X-X)4 motif near the C-terminus of the P6gag protein. Interacts with host UNG. May interact with host RAD23A/HHR23A. Interacts with host VPRBP/DCAF1, leading to hijack the CUL4A-RBX1-DDB1-DCAF1/VPRBP complex, mediating ubiquitination of host proteins such as TERT and ZGPAT and arrest of the cell cycle in G2 phase. In terms of processing, phosphorylated on several residues by host. These phosphorylations regulate VPR activity for the nuclear import of the HIV-1 pre-integration complex.

It localises to the virion. The protein resides in the host nucleus. It is found in the host extracellular space. During virus replication, may deplete host UNG protein, and incude G2-M cell cycle arrest. Acts by targeting specific host proteins for degradation by the 26S proteasome, through association with the cellular CUL4A-DDB1 E3 ligase complex by direct interaction with host VPRPB/DCAF-1. Cell cycle arrest reportedly occurs within hours of infection and is not blocked by antiviral agents, suggesting that it is initiated by the VPR carried into the virion. Additionally, VPR induces apoptosis in a cell cycle dependent manner suggesting that these two effects are mechanistically linked. Detected in the serum and cerebrospinal fluid of AIDS patient, VPR may also induce cell death to bystander cells. Functionally, during virus entry, plays a role in the transport of the viral pre-integration (PIC) complex to the host nucleus. This function is crucial for viral infection of non-dividing macrophages. May act directly at the nuclear pore complex, by binding nucleoporins phenylalanine-glycine (FG)-repeat regions. The polypeptide is Protein Vpr (Homo sapiens (Human)).